The following is a 443-amino-acid chain: 3-phosphoshikimate 1-carboxyvinyltransferase (443 aa).

Lysine 24, serine 25, and arginine 29 together coordinate 3-phosphoshikimate. Lysine 24 is a phosphoenolpyruvate binding site. Phosphoenolpyruvate contacts are provided by glycine 95 and arginine 123. Serine 167, glutamine 169, aspartate 323, and lysine 350 together coordinate 3-phosphoshikimate. Glutamine 169 is a binding site for phosphoenolpyruvate. The Proton acceptor role is filled by aspartate 323. Positions 354 and 398 each coordinate phosphoenolpyruvate.

The protein belongs to the EPSP synthase family. In terms of assembly, monomer.

It is found in the cytoplasm. The enzyme catalyses 3-phosphoshikimate + phosphoenolpyruvate = 5-O-(1-carboxyvinyl)-3-phosphoshikimate + phosphate. It participates in metabolic intermediate biosynthesis; chorismate biosynthesis; chorismate from D-erythrose 4-phosphate and phosphoenolpyruvate: step 6/7. Catalyzes the transfer of the enolpyruvyl moiety of phosphoenolpyruvate (PEP) to the 5-hydroxyl of shikimate-3-phosphate (S3P) to produce enolpyruvyl shikimate-3-phosphate and inorganic phosphate. The chain is 3-phosphoshikimate 1-carboxyvinyltransferase from Caulobacter vibrioides (strain ATCC 19089 / CIP 103742 / CB 15) (Caulobacter crescentus).